Reading from the N-terminus, the 131-residue chain is Translation initiation factor 5A (131 aa).

Lys-36 is modified (hypusine).

It belongs to the eIF-5A family.

It is found in the cytoplasm. Functions by promoting the formation of the first peptide bond. The polypeptide is Translation initiation factor 5A (eIF5A) (Metallosphaera sedula (strain ATCC 51363 / DSM 5348 / JCM 9185 / NBRC 15509 / TH2)).